Here is a 249-residue protein sequence, read N- to C-terminus: Olfactory receptor 1571 (249 aa).

A helical transmembrane segment spans residues 1–9; it reads LLMCNLCFA. Residues 10–40 are Extracellular-facing; the sequence is DICFTSASIPTNLVNIQTKNKVITYEGCISQ. A disulfide bridge links Cys37 with Cys119. Residues 41–60 form a helical membrane-spanning segment; that stretch reads VYFFILFGVLDNFLLAVMAY. At 61–82 the chain is on the cytoplasmic side; that stretch reads DRYVAICHPLHYTVIMNRRLCG. A helical membrane pass occupies residues 83 to 103; it reads LLVLGSWVTTALNSLLQSSMA. Over 104-136 the chain is Extracellular; the sequence is LRLSFCTDLKIPHFVCELNQLVLLACNDTFPND. A glycan (N-linked (GlcNAc...) asparagine) is linked at Asn130. Residues 137 to 158 form a helical membrane-spanning segment; sequence MVMYFAAVLLGGGPLAGILYSY. The Cytoplasmic segment spans residues 159-180; that stretch reads SKIVSSIRAISSSQGKYKAFST. A helical membrane pass occupies residues 181-200; sequence CASHLSVVSLFYSTLLGVYL. The Extracellular portion of the chain corresponds to 201–210; the sequence is SSSFTQNSHS. The chain crosses the membrane as a helical span at residues 211–232; sequence TARASVMYSVVTPMLNPFIYSL. Over 233–249 the chain is Cytoplasmic; sequence RNKDLMGALRRLFRRKP.

The protein belongs to the G-protein coupled receptor 1 family. As to expression, tongue specific.

It localises to the cell membrane. Its function is as follows. Possible taste receptor. The protein is Olfactory receptor 1571 (Olr1571) of Rattus norvegicus (Rat).